The sequence spans 603 residues: Probable HECT-type ubiquitin ligase-interacting protein creD (603 aa).

2 disordered regions span residues 375–398 (ELDP…GTLS) and 432–499 (LNIT…MATP). Over residues 443 to 455 (TDHESQNDSEHRR) the composition is skewed to basic and acidic residues. Residues 465 to 481 (PSSGSNSHSPSSPVLSR) are compositionally biased toward low complexity. The segment covering 482–492 (RPSDEVDHEHV) has biased composition (basic and acidic residues).

It belongs to the arrestin family. As to quaternary structure, interacts with hulA.

Component of the regulatory network controlling carbon source utilization through ubiquitination and deubiquitination involving creA, creB, creC, creD and acrB. May be involved in signaling by recognizing appropriately phosphorylated substrates via its arrestin domains and then recruit a HECT-type ubiquitin ligase such as hulA, leading to ubiquitination of the substrate, providing a link between ubiquitination and phosphorylation in protein regulation and stability. In Aspergillus flavus (strain ATCC 200026 / FGSC A1120 / IAM 13836 / NRRL 3357 / JCM 12722 / SRRC 167), this protein is Probable HECT-type ubiquitin ligase-interacting protein creD (creD).